The chain runs to 226 residues: Ribosome maturation factor RimM (226 aa).

The PRC barrel domain maps to 144 to 225 (ADEFYWVDLI…RIVVDWEADY (82 aa)).

Belongs to the RimM family. As to quaternary structure, binds ribosomal protein uS19.

The protein localises to the cytoplasm. An accessory protein needed during the final step in the assembly of 30S ribosomal subunit, possibly for assembly of the head region. Essential for efficient processing of 16S rRNA. May be needed both before and after RbfA during the maturation of 16S rRNA. It has affinity for free ribosomal 30S subunits but not for 70S ribosomes. In Burkholderia ambifaria (strain ATCC BAA-244 / DSM 16087 / CCUG 44356 / LMG 19182 / AMMD) (Burkholderia cepacia (strain AMMD)), this protein is Ribosome maturation factor RimM.